A 352-amino-acid chain; its full sequence is Molybdenum import ATP-binding protein ModC (352 aa).

The ABC transporter domain occupies 1–229; that stretch reads MLELNFSQTL…SVMHPWLPKE (229 aa). 31–38 is an ATP binding site; it reads GVSGAGKT. The Mop domain maps to 289 to 352; it reads QTSIRNVLRA…AQVKSVSITA (64 aa).

This sequence belongs to the ABC transporter superfamily. Molybdate importer (TC 3.A.1.8) family. In terms of assembly, the complex is composed of two ATP-binding proteins (ModC), two transmembrane proteins (ModB) and a solute-binding protein (ModA).

Its subcellular location is the cell inner membrane. The enzyme catalyses molybdate(out) + ATP + H2O = molybdate(in) + ADP + phosphate + H(+). Part of the ABC transporter complex ModABC involved in molybdenum import. Responsible for energy coupling to the transport system. The protein is Molybdenum import ATP-binding protein ModC of Salmonella paratyphi A (strain ATCC 9150 / SARB42).